Reading from the N-terminus, the 481-residue chain is Aspartyl/glutamyl-tRNA(Asn/Gln) amidotransferase subunit B (481 aa).

It belongs to the GatB/GatE family. GatB subfamily. Heterotrimer of A, B and C subunits.

It catalyses the reaction L-glutamyl-tRNA(Gln) + L-glutamine + ATP + H2O = L-glutaminyl-tRNA(Gln) + L-glutamate + ADP + phosphate + H(+). It carries out the reaction L-aspartyl-tRNA(Asn) + L-glutamine + ATP + H2O = L-asparaginyl-tRNA(Asn) + L-glutamate + ADP + phosphate + 2 H(+). Allows the formation of correctly charged Asn-tRNA(Asn) or Gln-tRNA(Gln) through the transamidation of misacylated Asp-tRNA(Asn) or Glu-tRNA(Gln) in organisms which lack either or both of asparaginyl-tRNA or glutaminyl-tRNA synthetases. The reaction takes place in the presence of glutamine and ATP through an activated phospho-Asp-tRNA(Asn) or phospho-Glu-tRNA(Gln). The sequence is that of Aspartyl/glutamyl-tRNA(Asn/Gln) amidotransferase subunit B from Pseudomonas syringae pv. syringae (strain B728a).